A 189-amino-acid chain; its full sequence is Peptidyl-tRNA hydrolase (189 aa).

Position 15 (tyrosine 15) interacts with tRNA. Histidine 20 acts as the Proton acceptor in catalysis. Residues phenylalanine 66, asparagine 68, and asparagine 114 each coordinate tRNA.

It belongs to the PTH family. As to quaternary structure, monomer.

The protein localises to the cytoplasm. The enzyme catalyses an N-acyl-L-alpha-aminoacyl-tRNA + H2O = an N-acyl-L-amino acid + a tRNA + H(+). In terms of biological role, hydrolyzes ribosome-free peptidyl-tRNAs (with 1 or more amino acids incorporated), which drop off the ribosome during protein synthesis, or as a result of ribosome stalling. Its function is as follows. Catalyzes the release of premature peptidyl moieties from peptidyl-tRNA molecules trapped in stalled 50S ribosomal subunits, and thus maintains levels of free tRNAs and 50S ribosomes. The polypeptide is Peptidyl-tRNA hydrolase (Streptococcus pyogenes serotype M3 (strain ATCC BAA-595 / MGAS315)).